The primary structure comprises 515 residues: Cytochrome P450 monooxygenase janP (515 aa).

The chain crosses the membrane as a helical span at residues G20–L36. Residue C456 coordinates heme. N-linked (GlcNAc...) asparagine glycosylation is present at N501.

Belongs to the cytochrome P450 family. Heme serves as cofactor.

The protein resides in the membrane. It functions in the pathway secondary metabolite biosynthesis. In terms of biological role, cytochrome P450 monooxygenase; part of the gene cluster that mediates the biosynthesis of the indole diterpenes janthitremanes such as shearinine K or shearinine A. The geranylgeranyl diphosphate (GGPP) synthase janG catalyzes the first step in janthitremane biosynthesis via conversion of farnesyl pyrophosphate and isopentyl pyrophosphate into geranylgeranyl pyrophosphate (GGPP). Condensation of indole-3-glycerol phosphate with GGPP by the prenyl transferase janC then forms 3-geranylgeranylindole (3-GGI). Epoxidation by the FAD-dependent monooxygenase janM leads to a epoxidized-GGI that is substrate of the terpene cyclase janB for cyclization to yield paspaline. Paspaline is subsequently converted to 13-desoxypaspaline by the cytochrome P450 monooxygenase janP, via beta-PC-M6 in a series of alpha-face oxidations. The cytochrome P450 monooxygenase janQ is proposed to carry out sequential beta-face oxidation steps at C-7 and C-13 of 13-desoxypaspaline to form paspalicine and paspalinine respectively. The indole diterpene prenyltransferase janD may then convert paspalinine into shearinine K which is substrate of janO and/or additional enzymes for oxidation and cyclization to generate shearinine A. The polypeptide is Cytochrome P450 monooxygenase janP (Penicillium janthinellum (Penicillium vitale)).